The primary structure comprises 304 residues: Acetaldehyde dehydrogenase 1 (304 aa).

C131 serves as the catalytic Acyl-thioester intermediate. NAD(+)-binding positions include 162–170 (SAGPGTRKN) and N273.

This sequence belongs to the acetaldehyde dehydrogenase family.

The catalysed reaction is acetaldehyde + NAD(+) + CoA = acetyl-CoA + NADH + H(+). In Dechloromonas aromatica (strain RCB), this protein is Acetaldehyde dehydrogenase 1.